The primary structure comprises 204 residues: Probable UMP-CMP kinase 1 (204 aa).

31-36 (GSGKGT) provides a ligand contact to ATP. Residues 51 to 80 (SAGDLLRAEIKSGSEFGAMIQSMIAEGRIV) form an NMP region. A ribonucleoside 5'-phosphate is bound by residues R57, 78–80 (RIV), and 105–108 (GFPR). N112 lines the CMP pocket. Residues 143–151 (SRNQGREDD) are LID. R144 is an ATP binding site. A ribonucleoside 5'-phosphate-binding residues include R148 and R159. An ATP-binding site is contributed by K187.

Belongs to the adenylate kinase family. UMP-CMP kinase subfamily. In terms of assembly, monomer. It depends on Mg(2+) as a cofactor.

The protein resides in the cytoplasm. The protein localises to the nucleus. It catalyses the reaction CMP + ATP = CDP + ADP. The enzyme catalyses dCMP + ATP = dCDP + ADP. The catalysed reaction is UMP + ATP = UDP + ADP. Catalyzes the phosphorylation of pyrimidine nucleoside monophosphates at the expense of ATP. Plays an important role in de novo pyrimidine nucleotide biosynthesis. Has preference for UMP and CMP as phosphate acceptors. This Arabidopsis thaliana (Mouse-ear cress) protein is Probable UMP-CMP kinase 1 (UMK1).